The following is a 223-amino-acid chain: Phosphoribosylformylglycinamidine synthase subunit PurQ (223 aa).

Positions 4–223 (RIGVITFPGT…FQSVLSTLVS (220 aa)) constitute a Glutamine amidotransferase type-1 domain. Cysteine 87 acts as the Nucleophile in catalysis. Residues histidine 195 and glutamate 197 contribute to the active site.

As to quaternary structure, part of the FGAM synthase complex composed of 1 PurL, 1 PurQ and 2 PurS subunits.

It localises to the cytoplasm. It carries out the reaction N(2)-formyl-N(1)-(5-phospho-beta-D-ribosyl)glycinamide + L-glutamine + ATP + H2O = 2-formamido-N(1)-(5-O-phospho-beta-D-ribosyl)acetamidine + L-glutamate + ADP + phosphate + H(+). The enzyme catalyses L-glutamine + H2O = L-glutamate + NH4(+). It participates in purine metabolism; IMP biosynthesis via de novo pathway; 5-amino-1-(5-phospho-D-ribosyl)imidazole from N(2)-formyl-N(1)-(5-phospho-D-ribosyl)glycinamide: step 1/2. Functionally, part of the phosphoribosylformylglycinamidine synthase complex involved in the purines biosynthetic pathway. Catalyzes the ATP-dependent conversion of formylglycinamide ribonucleotide (FGAR) and glutamine to yield formylglycinamidine ribonucleotide (FGAM) and glutamate. The FGAM synthase complex is composed of three subunits. PurQ produces an ammonia molecule by converting glutamine to glutamate. PurL transfers the ammonia molecule to FGAR to form FGAM in an ATP-dependent manner. PurS interacts with PurQ and PurL and is thought to assist in the transfer of the ammonia molecule from PurQ to PurL. The polypeptide is Phosphoribosylformylglycinamidine synthase subunit PurQ (Corynebacterium jeikeium (strain K411)).